We begin with the raw amino-acid sequence, 266 residues long: Undecaprenyl-diphosphatase (266 aa).

The next 8 membrane-spanning stretches (helical) occupy residues 1-21, 39-59, 87-107, 111-131, 144-164, 183-203, 218-238, and 246-266; these read MDTF…FLPI, QGLS…VMYF, WWII…KDFI, FRSI…LWWA, VGWK…IPGT, AAAR…AILV, ALGL…HYFL, and MTPF…IIFL.

The protein belongs to the UppP family.

Its subcellular location is the cell inner membrane. The enzyme catalyses di-trans,octa-cis-undecaprenyl diphosphate + H2O = di-trans,octa-cis-undecaprenyl phosphate + phosphate + H(+). Its function is as follows. Catalyzes the dephosphorylation of undecaprenyl diphosphate (UPP). Confers resistance to bacitracin. The chain is Undecaprenyl-diphosphatase from Shewanella pealeana (strain ATCC 700345 / ANG-SQ1).